The sequence spans 200 residues: 2-phospho-L-lactate guanylyltransferase (200 aa).

It belongs to the CofC family. In terms of assembly, homodimer.

The enzyme catalyses (2S)-2-phospholactate + GTP + H(+) = (2S)-lactyl-2-diphospho-5'-guanosine + diphosphate. Its pathway is cofactor biosynthesis; coenzyme F420 biosynthesis. Its function is as follows. Guanylyltransferase that catalyzes the activation of (2S)-2-phospholactate (2-PL) as (2S)-lactyl-2-diphospho-5'-guanosine, via the condensation of 2-PL with GTP. It is involved in the biosynthesis of coenzyme F420, a hydride carrier cofactor. This is 2-phospho-L-lactate guanylyltransferase from Ferroglobus placidus (strain DSM 10642 / AEDII12DO).